The chain runs to 183 residues: Hypoxanthine-guanine phosphoribosyltransferase (183 aa).

Residues arginine 47 and glycine 48 each coordinate diphosphate. 2 residues coordinate Mg(2+): glutamate 103 and aspartate 104. The Proton acceptor role is filled by aspartate 107. GMP is bound by residues lysine 134, 155-156, and aspartate 162; that span reads FV. Arginine 168 contacts diphosphate.

It belongs to the purine/pyrimidine phosphoribosyltransferase family. Requires Mg(2+) as cofactor.

The protein localises to the cytoplasm. The catalysed reaction is IMP + diphosphate = hypoxanthine + 5-phospho-alpha-D-ribose 1-diphosphate. It carries out the reaction GMP + diphosphate = guanine + 5-phospho-alpha-D-ribose 1-diphosphate. The protein operates within purine metabolism; IMP biosynthesis via salvage pathway; IMP from hypoxanthine: step 1/1. Its pathway is purine metabolism; GMP biosynthesis via salvage pathway; GMP from guanine: step 1/1. Functionally, purine salvage pathway enzyme that catalyzes the transfer of the ribosyl-5-phosphate group from 5-phospho-alpha-D-ribose 1-diphosphate (PRPP) to the N9 position of the 6-oxopurines hypoxanthine and guanine to form the corresponding ribonucleotides IMP (inosine 5'-monophosphate) and GMP (guanosine 5'-monophosphate), with the release of PPi. This is Hypoxanthine-guanine phosphoribosyltransferase (hpt) from Lactococcus lactis subsp. lactis (strain IL1403) (Streptococcus lactis).